Here is a 52-residue protein sequence, read N- to C-terminus: Large ribosomal subunit protein bL32c (52 aa).

This sequence belongs to the bacterial ribosomal protein bL32 family.

It is found in the plastid. The protein localises to the chloroplast. The chain is Large ribosomal subunit protein bL32c from Capsella bursa-pastoris (Shepherd's purse).